A 423-amino-acid chain; its full sequence is MNNQLVPQNAAAAAAAAAAAAAAAAANSLKSRKPYTISKQRENWTDEEHQKFLEALTLFDRDWKKIESFVGSKTVIQIRSHAQKYFIKVQKNNTGERIPPPRPKRKSIQPYPQKQKHDGMGAFIPDSLSGNHFISSSSFATWMTYRGLMPNISESQINPSDLQKQLEQLQQAQQYIQQAVTTAQSSQRNGGLPPNPSSNNGGTTLTPNFPKIYAFLSNLFESNGTSFTEALSDLSMIDRETMQILMHNLAINLANQQYRDNHQTLSEQYRMKRDEDEDLNAIMISPRNSTGNINVSGDFYDNNSNNNNNNNNNNNNNNNNNNNNNNNNNNNNNNNNNNNNNNNNNNNNNNNNNNGGDFGDQNHSNMVNLGNYYNNHPNQNTINALYSLNQPSTLSNNPLNMVGNLNPQKQPPFNLNLNMQSGF.

The 55-residue stretch at 36-90 (TISKQRENWTDEEHQKFLEALTLFDRDWKKIESFVGSKTVIQIRSHAQKYFIKVQ) folds into the HTH myb-type domain. The H-T-H motif DNA-binding region spans 63-86 (WKKIESFVGSKTVIQIRSHAQKYF). 3 disordered regions span residues 93–116 (NTGERIPPPRPKRKSIQPYPQKQK), 177–205 (QQAVTTAQSSQRNGGLPPNPSSNNGGTTL), and 284–372 (ISPR…LGNY). The span at 177–202 (QQAVTTAQSSQRNGGLPPNPSSNNGG) shows a compositional bias: low complexity. The span at 286–295 (PRNSTGNINV) shows a compositional bias: polar residues. Over residues 302–354 (NNSNNNNNNNNNNNNNNNNNNNNNNNNNNNNNNNNNNNNNNNNNNNNNNNNNN) the composition is skewed to low complexity. Residues 361–372 (QNHSNMVNLGNY) show a composition bias toward polar residues.

The protein localises to the nucleus. This Dictyostelium discoideum (Social amoeba) protein is Myb-like protein G (mybG).